An 83-amino-acid chain; its full sequence is Large ribosomal subunit protein bL31 (83 aa).

The protein belongs to the bacterial ribosomal protein bL31 family. Type A subfamily. As to quaternary structure, part of the 50S ribosomal subunit.

Binds the 23S rRNA. The polypeptide is Large ribosomal subunit protein bL31 (Gloeothece citriformis (strain PCC 7424) (Cyanothece sp. (strain PCC 7424))).